The following is a 434-amino-acid chain: Probable carboxypeptidase BDBG_01803 (434 aa).

The N-terminal stretch at 1-20 is a signal peptide; the sequence is MKLSHLAAALSAQLVAPVAA. Residues Asn-35, Asn-136, and Asn-150 are each glycosylated (N-linked (GlcNAc...) asparagine). Asp-160 is a Zn(2+) binding site. Catalysis depends on Glu-192, which acts as the Proton acceptor. Glu-193 is a Zn(2+) binding site. A glycan (N-linked (GlcNAc...) asparagine) is linked at Asn-343.

It belongs to the peptidase M20A family. Zn(2+) is required as a cofactor.

It localises to the secreted. In Blastomyces gilchristii (strain SLH14081) (Blastomyces dermatitidis), this protein is Probable carboxypeptidase BDBG_01803.